The chain runs to 466 residues: MVDGGGGASDLLVIFGITGDLARKMTFRALYRLERHQLLDCPILGVASDDMSVGQLVKWARESIGRTEKIDDAVFDRLAGRLSYLHGDVTDSQLYDSLAELIGSACRPLYYLEMPPALFAPIVENLANVRLLERARVAVEKPFGHDLASALELNARLRAVLGEDQILRVDHFLGKQPVVELEYLRFANQALAELWDRNSISEIHITMAEDFGVEDRGKFYDAVGALRDVVQNHLLQVLALVTMEPPVGSSADDLNDKKAEVFRAMAPLDPDRCVRGQYLGYTEVAGVASDSATETYVALRTEIDNWRWAGVPIFVRAGKELPAKVTEVRLFLRRVPALAFLPNRRPAEPNQIVLRIDPDPGMRLQISAHTDDSWRDIHLDSSFAVDLGEPIRPYERLLYAGLVGDHQLFAREDSIEQTWRIVQPLLDNPGEIHRYDRGSWGPEAAQSLLRGHRGWQSPWLPRGTDA.

Residues Ser-48, 88–89, and Lys-141 each bind NADP(+); that span reads DV. 4 residues coordinate substrate: His-171, Lys-175, Glu-209, and Asp-228. Residue His-233 is the Proton acceptor of the active site. Residues Lys-319 and Lys-324 each coordinate substrate.

The protein belongs to the glucose-6-phosphate dehydrogenase family.

It catalyses the reaction D-glucose 6-phosphate + NADP(+) = 6-phospho-D-glucono-1,5-lactone + NADPH + H(+). Its pathway is carbohydrate degradation; pentose phosphate pathway; D-ribulose 5-phosphate from D-glucose 6-phosphate (oxidative stage): step 1/3. Catalyzes the oxidation of glucose 6-phosphate to 6-phosphogluconolactone. The protein is Glucose-6-phosphate 1-dehydrogenase 1 of Mycobacterium tuberculosis (strain ATCC 25618 / H37Rv).